A 234-amino-acid chain; its full sequence is Peptidase E (234 aa).

Catalysis depends on charge relay system residues Ser-123, Asp-138, and His-160.

It belongs to the peptidase S51 family.

It is found in the cytoplasm. It catalyses the reaction Dipeptidase E catalyzes the hydrolysis of dipeptides Asp-|-Xaa. It does not act on peptides with N-terminal Glu, Asn or Gln, nor does it cleave isoaspartyl peptides.. Its function is as follows. Hydrolyzes dipeptides containing N-terminal aspartate residues. May play a role in allowing the cell to use peptide aspartate to spare carbon otherwise required for the synthesis of the aspartate family of amino acids. The protein is Peptidase E of Actinobacillus pleuropneumoniae serotype 5b (strain L20).